A 233-amino-acid polypeptide reads, in one-letter code: Biosynthetic peptidoglycan transglycosylase (233 aa).

The helical transmembrane segment at 17–37 (IVLAVLALVVLPYVLIFFYLL) threads the bilayer.

This sequence belongs to the glycosyltransferase 51 family.

It localises to the cell inner membrane. It catalyses the reaction [GlcNAc-(1-&gt;4)-Mur2Ac(oyl-L-Ala-gamma-D-Glu-L-Lys-D-Ala-D-Ala)](n)-di-trans,octa-cis-undecaprenyl diphosphate + beta-D-GlcNAc-(1-&gt;4)-Mur2Ac(oyl-L-Ala-gamma-D-Glu-L-Lys-D-Ala-D-Ala)-di-trans,octa-cis-undecaprenyl diphosphate = [GlcNAc-(1-&gt;4)-Mur2Ac(oyl-L-Ala-gamma-D-Glu-L-Lys-D-Ala-D-Ala)](n+1)-di-trans,octa-cis-undecaprenyl diphosphate + di-trans,octa-cis-undecaprenyl diphosphate + H(+). The protein operates within cell wall biogenesis; peptidoglycan biosynthesis. Functionally, peptidoglycan polymerase that catalyzes glycan chain elongation from lipid-linked precursors. The sequence is that of Biosynthetic peptidoglycan transglycosylase from Rhizobium etli (strain ATCC 51251 / DSM 11541 / JCM 21823 / NBRC 15573 / CFN 42).